We begin with the raw amino-acid sequence, 433 residues long: ATP-dependent protease ATPase subunit HslU (433 aa).

Residues Ile18, 60-65 (GVGKTE), Asp246, Glu311, and Arg383 contribute to the ATP site.

Belongs to the ClpX chaperone family. HslU subfamily. As to quaternary structure, a double ring-shaped homohexamer of HslV is capped on each side by a ring-shaped HslU homohexamer. The assembly of the HslU/HslV complex is dependent on binding of ATP.

Its subcellular location is the cytoplasm. Functionally, ATPase subunit of a proteasome-like degradation complex; this subunit has chaperone activity. The binding of ATP and its subsequent hydrolysis by HslU are essential for unfolding of protein substrates subsequently hydrolyzed by HslV. HslU recognizes the N-terminal part of its protein substrates and unfolds these before they are guided to HslV for hydrolysis. This Cereibacter sphaeroides (strain ATCC 17025 / ATH 2.4.3) (Rhodobacter sphaeroides) protein is ATP-dependent protease ATPase subunit HslU.